Here is a 91-residue protein sequence, read N- to C-terminus: Small ribosomal subunit protein uS15 (91 aa).

This sequence belongs to the universal ribosomal protein uS15 family. Part of the 30S ribosomal subunit. Forms a bridge to the 50S subunit in the 70S ribosome, contacting the 23S rRNA.

In terms of biological role, one of the primary rRNA binding proteins, it binds directly to 16S rRNA where it helps nucleate assembly of the platform of the 30S subunit by binding and bridging several RNA helices of the 16S rRNA. Its function is as follows. Forms an intersubunit bridge (bridge B4) with the 23S rRNA of the 50S subunit in the ribosome. The protein is Small ribosomal subunit protein uS15 of Legionella pneumophila (strain Corby).